Consider the following 603-residue polypeptide: Protein US26 (603 aa).

Acidic residues predominate over residues 496 to 513 (EEEDQEEDDTSDDDDQEK). Disordered regions lie at residues 496–536 (EEED…GSLE) and 549–568 (AVAEQDRKKTQKKHKIDTAQ). Polar residues predominate over residues 517–533 (NPQNNIGSLTRTPSSPG).

This sequence belongs to the herpesviridae US22 family.

The protein is Protein US26 (US26) of Human cytomegalovirus (strain Merlin) (HHV-5).